The sequence spans 361 residues: Peptide chain release factor 1 (361 aa).

Gln-235 is subject to N5-methylglutamine.

Belongs to the prokaryotic/mitochondrial release factor family. Post-translationally, methylated by PrmC. Methylation increases the termination efficiency of RF1.

The protein resides in the cytoplasm. Functionally, peptide chain release factor 1 directs the termination of translation in response to the peptide chain termination codons UAG and UAA. This is Peptide chain release factor 1 from Xanthomonas campestris pv. campestris (strain B100).